We begin with the raw amino-acid sequence, 200 residues long: UPF0316 protein SAUSA300_1892 (200 aa).

The next 3 helical transmembrane spans lie at 8–28, 40–60, and 66–86; these read PWLMVLTIFIINICYVTFLTM, IAASVSFLEVLVYIVGLGLVM, and IQNIIAYAFGFSIGIIVGMKI.

It belongs to the UPF0316 family.

The protein localises to the cell membrane. The polypeptide is UPF0316 protein SAUSA300_1892 (Staphylococcus aureus (strain USA300)).